The chain runs to 64 residues: Large ribosomal subunit protein uL29 (64 aa).

Belongs to the universal ribosomal protein uL29 family.

The sequence is that of Large ribosomal subunit protein uL29 from Nitratiruptor sp. (strain SB155-2).